A 188-amino-acid chain; its full sequence is Transmembrane protein 160 (188 aa).

The transit peptide at Met-1–Arg-96 directs the protein to the mitochondrion. Positions Ser-21–Ser-53 are disordered. A Phosphoserine modification is found at Ser-48. 2 helical membrane passes run Phe-102–Ala-122 and Ala-135–Leu-155. The interval Pro-168–Glu-188 is disordered.

This sequence belongs to the TMEM160 family. As to expression, expressed in peripheral sensory neurons of dorsal root ganglia (DRG).

It is found in the mitochondrion inner membrane. This chain is Transmembrane protein 160, found in Mus musculus (Mouse).